The following is a 200-amino-acid chain: Membrane-spanning 4-domains subfamily A member 5 (200 aa).

Over M1 to T52 the chain is Cytoplasmic. A helical transmembrane segment spans residues I53–L73. The Extracellular segment spans residues K74–P80. Residues F81–F101 traverse the membrane as a helical segment. Residues L102–M120 lie on the Cytoplasmic side of the membrane. A helical transmembrane segment spans residues N121–L141. The Extracellular portion of the chain corresponds to D142 to V159. The helical transmembrane segment at T160 to I180 threads the bilayer. Residues S181 to C200 are Cytoplasmic-facing.

The protein belongs to the MS4A family. Expressed at high level in the testis. Detected also in the pancreas, heart and in the brain.

The protein localises to the membrane. Its function is as follows. May be involved in signal transduction as a component of a multimeric receptor complex. This Homo sapiens (Human) protein is Membrane-spanning 4-domains subfamily A member 5 (MS4A5).